A 180-amino-acid chain; its full sequence is ADP-ribosylation factor-like protein 1 (180 aa).

G2 carries N-myristoyl glycine lipidation. GTP contacts are provided by residues 23-30, 66-70, and 125-128; these read GLDGAGKT, DLGGQ, and NKQD.

The protein belongs to the small GTPase superfamily. Arf family. As to expression, expressed in neuronal cells. Expression in hypodermal tissues is absent.

Its subcellular location is the golgi apparatus. It localises to the cytoplasm. The protein resides in the cytoplasmic granule. GTP-binding protein that may be involved in protein trafficking; may modulate vesicle budding and uncoating within the Golgi apparatus. Plays a role in male tail tip morphogenesis. The polypeptide is ADP-ribosylation factor-like protein 1 (Caenorhabditis elegans).